Consider the following 107-residue polypeptide: Nucleoid-associated protein NE0434 (107 aa).

Belongs to the YbaB/EbfC family. As to quaternary structure, homodimer.

The protein resides in the cytoplasm. It is found in the nucleoid. Functionally, binds to DNA and alters its conformation. May be involved in regulation of gene expression, nucleoid organization and DNA protection. This Nitrosomonas europaea (strain ATCC 19718 / CIP 103999 / KCTC 2705 / NBRC 14298) protein is Nucleoid-associated protein NE0434.